Consider the following 231-residue polypeptide: Flagellar L-ring protein (231 aa).

The signal sequence occupies residues 1–18; sequence MNRLLSVFALGGAVLLAG. Cys-19 is lipidated: N-palmitoyl cysteine. Cys-19 carries the S-diacylglycerol cysteine lipid modification.

It belongs to the FlgH family. In terms of assembly, the basal body constitutes a major portion of the flagellar organelle and consists of four rings (L,P,S, and M) mounted on a central rod.

The protein localises to the cell outer membrane. The protein resides in the bacterial flagellum basal body. Its function is as follows. Assembles around the rod to form the L-ring and probably protects the motor/basal body from shearing forces during rotation. The chain is Flagellar L-ring protein from Pseudomonas putida (strain GB-1).